The chain runs to 340 residues: Glycerol-3-phosphate dehydrogenase [NAD(P)+] (340 aa).

The NADPH site is built by serine 11, tryptophan 12, arginine 33, and lysine 106. Positions 106, 137, and 139 each coordinate sn-glycerol 3-phosphate. Alanine 141 contacts NADPH. Sn-glycerol 3-phosphate-binding residues include lysine 192, aspartate 245, serine 255, arginine 256, and asparagine 257. Lysine 192 (proton acceptor) is an active-site residue. Arginine 256 serves as a coordination point for NADPH. Residues valine 280 and glutamate 282 each contribute to the NADPH site.

Belongs to the NAD-dependent glycerol-3-phosphate dehydrogenase family.

The protein localises to the cytoplasm. The enzyme catalyses sn-glycerol 3-phosphate + NAD(+) = dihydroxyacetone phosphate + NADH + H(+). It catalyses the reaction sn-glycerol 3-phosphate + NADP(+) = dihydroxyacetone phosphate + NADPH + H(+). It functions in the pathway membrane lipid metabolism; glycerophospholipid metabolism. Its function is as follows. Catalyzes the reduction of the glycolytic intermediate dihydroxyacetone phosphate (DHAP) to sn-glycerol 3-phosphate (G3P), the key precursor for phospholipid synthesis. This is Glycerol-3-phosphate dehydrogenase [NAD(P)+] from Bacillus cereus (strain G9842).